We begin with the raw amino-acid sequence, 77 residues long: Small ribosomal subunit protein bS21 (77 aa).

The segment covering Lys38–Arg52 has biased composition (basic and acidic residues). A disordered region spans residues Lys38–Lys77. A compositionally biased stretch (basic residues) spans Arg53–Ala62.

This sequence belongs to the bacterial ribosomal protein bS21 family.

This Bartonella henselae (strain ATCC 49882 / DSM 28221 / CCUG 30454 / Houston 1) (Rochalimaea henselae) protein is Small ribosomal subunit protein bS21.